A 229-amino-acid polypeptide reads, in one-letter code: MQVYSPSKISQQLETFLNSVANGLGHTMSHAMSQTFSETIVASVAKKAPKTSVLAAAQAAMQAEDKVSKPKKVKKTKSYADAAPKRVKKVKAPKEDTVVSEPEEAVVEQQEKQQPEKAVVEQQEKQQPEEAVVEQQEKQQPEEAVVEQQEKQQPEEAVVESEQPEQPEQPERQQQAQPERQQQAQPERQQQAQPEEAEDAEQEPVEQPTAKPKKVRKTQTESEDKPKRG.

The disordered stretch occupies residues 61–229 (MQAEDKVSKP…TESEDKPKRG (169 aa)). Residues 109–128 (QQEKQQPEKAVVEQQEKQQP) show a composition bias toward basic and acidic residues. Low complexity predominate over residues 166–194 (QPEQPERQQQAQPERQQQAQPERQQQAQP). A compositionally biased stretch (acidic residues) spans 195 to 204 (EEAEDAEQEP). The span at 218–229 (TQTESEDKPKRG) shows a compositional bias: basic and acidic residues.

This is an uncharacterized protein from Frog virus 3 (isolate Goorha) (FV-3).